The sequence spans 396 residues: Elongation factor Tu (396 aa).

Residues 10–205 (KTHANIGTIG…AVDEYIPTPE (196 aa)) enclose the tr-type G domain. The interval 19–26 (GHVDHGKT) is G1. 19–26 (GHVDHGKT) serves as a coordination point for GTP. Threonine 26 is a binding site for Mg(2+). The tract at residues 61 to 65 (GITIS) is G2. The segment at 82 to 85 (DCPG) is G3. Residues 82–86 (DCPGH) and 137–140 (NKCD) each bind GTP. The tract at residues 137 to 140 (NKCD) is G4. Residues 175–177 (SAL) are G5.

It belongs to the TRAFAC class translation factor GTPase superfamily. Classic translation factor GTPase family. EF-Tu/EF-1A subfamily. As to quaternary structure, monomer.

It is found in the cytoplasm. The enzyme catalyses GTP + H2O = GDP + phosphate + H(+). In terms of biological role, GTP hydrolase that promotes the GTP-dependent binding of aminoacyl-tRNA to the A-site of ribosomes during protein biosynthesis. This is Elongation factor Tu from Shouchella clausii (strain KSM-K16) (Alkalihalobacillus clausii).